We begin with the raw amino-acid sequence, 557 residues long: Transmembrane protein 209 (557 aa).

Residues 28 to 48 (VVLAWGLLNVSLAGMIYTEMT) traverse the membrane as a helical segment. Residue Asn-57 is glycosylated (N-linked (GlcNAc...) asparagine). A helical transmembrane segment spans residues 60-80 (YWPLWYIELALASLFSLNALF). 2 disordered regions span residues 108-156 (PYSS…KFSP) and 194-232 (YSSS…TDKE). Positions 125–140 (VPASTPSPSMQGQNVL) are enriched in polar residues. Low complexity-rich tracts occupy residues 141–156 (SYSP…KFSP), 194–205 (YSSSPGSSQYPS), and 219–228 (RSSPSTYSSP). N-linked (GlcNAc...) asparagine glycans are attached at residues Asn-273 and Asn-343.

The protein resides in the membrane. It localises to the nucleus envelope. Its subcellular location is the golgi apparatus. It is found in the cytoplasm. The polypeptide is Transmembrane protein 209 (tmem209) (Xenopus tropicalis (Western clawed frog)).